A 269-amino-acid chain; its full sequence is Putative hydro-lyase M446_2125 (269 aa).

It belongs to the D-glutamate cyclase family.

The protein is Putative hydro-lyase M446_2125 of Methylobacterium sp. (strain 4-46).